A 197-amino-acid chain; its full sequence is MADRIASVERNTLETQIKVSINLDGTGKFNCVTGVPFLDHMLEQVARHGLIDLDIHAVGDLHIDAHHTVEDLGITLGQAFDIAVGDKKGIKRYGHAYVPLDEALSRVVIDFSGRPGLEMHVPFARASVGGFDVDLFSEFFHGFINHAKVTLHLDNLRGKNTHHQAETIFKAFGRALRMALEADERMAGQMPSTKGSL.

The protein belongs to the imidazoleglycerol-phosphate dehydratase family.

Its subcellular location is the cytoplasm. The enzyme catalyses D-erythro-1-(imidazol-4-yl)glycerol 3-phosphate = 3-(imidazol-4-yl)-2-oxopropyl phosphate + H2O. It participates in amino-acid biosynthesis; L-histidine biosynthesis; L-histidine from 5-phospho-alpha-D-ribose 1-diphosphate: step 6/9. The protein is Imidazoleglycerol-phosphate dehydratase of Marinomonas sp. (strain MWYL1).